Here is a 275-residue protein sequence, read N- to C-terminus: Bifunctional protein FolD (275 aa).

NADP(+) is bound by residues 161 to 163, S186, and T227; that span reads GRS.

The protein belongs to the tetrahydrofolate dehydrogenase/cyclohydrolase family. Homodimer.

It carries out the reaction (6R)-5,10-methylene-5,6,7,8-tetrahydrofolate + NADP(+) = (6R)-5,10-methenyltetrahydrofolate + NADPH. It catalyses the reaction (6R)-5,10-methenyltetrahydrofolate + H2O = (6R)-10-formyltetrahydrofolate + H(+). Its pathway is one-carbon metabolism; tetrahydrofolate interconversion. In terms of biological role, catalyzes the oxidation of 5,10-methylenetetrahydrofolate to 5,10-methenyltetrahydrofolate and then the hydrolysis of 5,10-methenyltetrahydrofolate to 10-formyltetrahydrofolate. In Parafrankia sp. (strain EAN1pec), this protein is Bifunctional protein FolD.